The primary structure comprises 467 residues: Ammonium transporter Rh type C (467 aa).

At 1 to 9 the chain is on the cytoplasmic side; it reads MAWNTNLRW. Residues 10 to 30 traverse the membrane as a helical segment; that stretch reads RLPLLCLVLEVAMVVLFGLFV. Over 31–61 the chain is Extracellular; the sequence is RYSPDADSSWSNEKRKGNITSDLENEFYYRY. A glycan (N-linked (GlcNAc...) asparagine) is linked at Asn48. The chain crosses the membrane as a helical span at residues 62–82; it reads PSFQDVHVMVFLGFGFLMTFL. Residues 83-86 lie on the Cytoplasmic side of the membrane; the sequence is QRYG. The helical transmembrane segment at 87–107 threads the bilayer; the sequence is YCALGFNFLLAALGVQWALLM. The Extracellular portion of the chain corresponds to 108-131; it reads QGWFQYTKDRLILLGIKNLIDADS. 2 consecutive transmembrane segments (helical) span residues 132-152 and 153-173; these read CVAS…PVQM and LLMT…LLHV. Over 174–179 the chain is Extracellular; it reads LEVKDA. The helical transmembrane segment at 180–200 threads the bilayer; the sequence is GGSITIHIFGAYFGLTVTWIL. Over 201-219 the chain is Cytoplasmic; that stretch reads YRHNLDHSRERQSSVYHSN. Residues 220 to 240 form a helical membrane-spanning segment; that stretch reads LFAMIGTLFLWIYWPSFNSAM. The Extracellular segment spans residues 241–251; it reads SNYGDAQHRAA. Residues 252-272 form a helical membrane-spanning segment; sequence INTYCSLAASVLTSVAMSSVL. Over 273–282 the chain is Cytoplasmic; it reads HKKGKLDMVH. A helical transmembrane segment spans residues 283–303; the sequence is IQNATLAGGVGVGTAAEMMLM. Residue Pro304 is a topological domain, extracellular. Residues 305-325 form a helical membrane-spanning segment; sequence YGALIVGFICGAVSTLGFVYL. The Cytoplasmic segment spans residues 326-343; that stretch reads TPFLESRLRIQDTCGIHN. The helical transmembrane segment at 344–364 threads the bilayer; it reads LHGIPGLIGAIVGAVTAAYAS. The Extracellular segment spans residues 365 to 391; that stretch reads PDGDRGFVYPFGFHNEKDEKVQGRFQA. The chain crosses the membrane as a helical span at residues 392–412; sequence FGLLLTLAIAMVGGTIMGLIL. The Cytoplasmic segment spans residues 413–467; the sequence is KLPFWGQAMDEDCFDDSIYWEMHEEKSSSPEDHTHKPSVPTEPVEQPTSSATLAP. Residues 436–447 show a composition bias toward basic and acidic residues; it reads EEKSSSPEDHTH. Residues 436-467 are disordered; it reads EEKSSSPEDHTHKPSVPTEPVEQPTSSATLAP. Residues 458–467 are compositionally biased toward polar residues; it reads QPTSSATLAP.

It belongs to the ammonium transporter (TC 2.A.49) family. Rh subfamily. Homotrimer. N-glycosylated.

Its subcellular location is the cell membrane. It localises to the apical cell membrane. It catalyses the reaction NH4(+)(in) = NH4(+)(out). The catalysed reaction is methylamine(out) = methylamine(in). It carries out the reaction CO2(out) = CO2(in). In terms of biological role, ammonium transporter involved in the maintenance of acid-base homeostasis. Transports ammonium and its related derivative methylammonium across the plasma membrane of epithelial cells likely contributing to renal transepithelial ammonia transport and ammonia metabolism. Postulated to primarily mediate an electroneutral bidirectional transport of NH3 ammonia species according to a mechanism that implies interaction of an NH4(+) ion with acidic residues of the pore entry followed by dissociation of NH4(+) into NH3 and H(+). As a result NH3 transits through the central pore and is protonated on the extracellular side reforming NH4(+). May act as a CO2 channel providing for renal acid secretion. The sequence is that of Ammonium transporter Rh type C (RHCG) from Oryctolagus cuniculus (Rabbit).